Consider the following 118-residue polypeptide: Putative pterin-4-alpha-carbinolamine dehydratase (118 aa).

It belongs to the pterin-4-alpha-carbinolamine dehydratase family.

The enzyme catalyses (4aS,6R)-4a-hydroxy-L-erythro-5,6,7,8-tetrahydrobiopterin = (6R)-L-erythro-6,7-dihydrobiopterin + H2O. This chain is Putative pterin-4-alpha-carbinolamine dehydratase, found in Pseudomonas fluorescens (strain SBW25).